An 82-amino-acid polypeptide reads, in one-letter code: Alpha-defensin 17 (82 aa).

An N-terminal signal peptide occupies residues 1 to 8; it reads LLAFQVQA. The segment at 1–43 is disordered; the sequence is LLAFQVQADPIQNTDEETKTEEQPGEEDQAVSVSFGDPEGTSL. A propeptide spanning residues 9-47 is cleaved from the precursor; that stretch reads DPIQNTDEETKTEEQPGEEDQAVSVSFGDPEGTSLQEES. Cystine bridges form between C53–C81, C55–C70, and C60–C80.

The protein belongs to the alpha-defensin family.

The protein localises to the secreted. Functionally, probably contributes to the antimicrobial barrier function of the small bowel mucosa. This is Alpha-defensin 17 (Defa17) from Mus musculus (Mouse).